Here is a 172-residue protein sequence, read N- to C-terminus: MVDKRESYTKEDLEASGRGELFGAGGPPLPAGNMLMMDRVVKMTEDGGTYGKGYVEAELDINPDLWFFGCHFIGDPVMPGCLGLDAMWQLVGFYLGWLGGEGKGRALGVGEVKFTGQVLPDAKKVTYRINFKRIIMRKLIMGVADGEVLVDGKVIYTATDLKVGLFKDTNAF.

His-71 is an active-site residue.

It belongs to the thioester dehydratase family. FabA subfamily. Homodimer.

Its subcellular location is the cytoplasm. The enzyme catalyses a (3R)-hydroxyacyl-[ACP] = a (2E)-enoyl-[ACP] + H2O. The catalysed reaction is (3R)-hydroxydecanoyl-[ACP] = (2E)-decenoyl-[ACP] + H2O. It carries out the reaction (2E)-decenoyl-[ACP] = (3Z)-decenoyl-[ACP]. The protein operates within lipid metabolism; fatty acid biosynthesis. Its function is as follows. Necessary for the introduction of cis unsaturation into fatty acids. Catalyzes the dehydration of (3R)-3-hydroxydecanoyl-ACP to E-(2)-decenoyl-ACP and then its isomerization to Z-(3)-decenoyl-ACP. Can catalyze the dehydratase reaction for beta-hydroxyacyl-ACPs with saturated chain lengths up to 16:0, being most active on intermediate chain length. The sequence is that of 3-hydroxydecanoyl-[acyl-carrier-protein] dehydratase from Yersinia enterocolitica serotype O:8 / biotype 1B (strain NCTC 13174 / 8081).